The primary structure comprises 600 residues: DNA mismatch repair protein MutL (600 aa).

Belongs to the DNA mismatch repair MutL/HexB family.

This protein is involved in the repair of mismatches in DNA. It is required for dam-dependent methyl-directed DNA mismatch repair. May act as a 'molecular matchmaker', a protein that promotes the formation of a stable complex between two or more DNA-binding proteins in an ATP-dependent manner without itself being part of a final effector complex. The protein is DNA mismatch repair protein MutL of Sinorhizobium fredii (strain NBRC 101917 / NGR234).